A 492-amino-acid chain; its full sequence is G2/mitotic-specific cyclin CLB2 (492 aa).

The segment at 1–176 is disordered; sequence MPQVTKTNNE…QPEVGERSQS (176 aa). A compositionally biased stretch (polar residues) spans 23–33; the sequence is QESISTIKNTT. Low complexity predominate over residues 34–58; the sequence is ISNSQHKQQTQQQISSPPQVSVTSS. Polar residues predominate over residues 59–83; sequence EGVSHVNTRQYLGDVSNQYITNAKP. Residues 111–135 show a composition bias toward low complexity; it reads ASDNNNNGSTSSSSNSSNNNNNDAN. Residues 208 to 334 enclose the Cyclin N-terminal domain; the sequence is EIFSYYYELE…MLTILNFDLN (127 aa).

The protein belongs to the cyclin family. Cyclin AB subfamily.

Functionally, 2/mitotic-specific cyclin essential for the control of the cell cycle at the G2/M (mitosis) transition. G2/M cyclins accumulate steadily during G2 and are abruptly destroyed at mitosis. Degradation is necessary for the cell to exit from mitosis. Plays a role in morphogenesis by negatively regulating polarized growth. Through binding to CDC28 regulates cytokinesis, partly by phosphorylation of the actomyosin ring component IQG1. Also involved in the phosphorylation of CDC6 and CDC54. The protein is G2/mitotic-specific cyclin CLB2 (CLB2) of Candida albicans (strain SC5314 / ATCC MYA-2876) (Yeast).